A 250-amino-acid chain; its full sequence is High affinity immunoglobulin epsilon receptor subunit alpha (250 aa).

The first 23 residues, 1-23 (MVTGRSAQLCLALLFMSLDVILT), serve as a signal peptide directing secretion. The Extracellular portion of the chain corresponds to 24-204 (ATEKSVLTLD…AYKCKYYWLQ (181 aa)). Positions 28 to 104 (SVLTLDPPWI…QGLFKSKPVY (77 aa)) constitute an Ig-like 1 domain. A disulfide bond links Cys-49 and Cys-92. Asn-58, Asn-66, Asn-73, Asn-106, Asn-152, and Asn-167 each carry an N-linked (GlcNAc...) asparagine glycan. The 68-residue stretch at 114-181 (LQTSADMVLV…YHCKGYLRQV (68 aa)) folds into the Ig-like 2 domain. Cys-131 and Cys-174 are disulfide-bonded. The chain crosses the membrane as a helical span at residues 205–223 (LIFPLLVAILFAVDTGLLL). Residues 224-250 (STEEQFKSVLEIQKTGKYKKVETELLT) lie on the Cytoplasmic side of the membrane.

In terms of assembly, tetramer of an alpha chain, a beta chain, and two disulfide linked gamma chains. Interacts with IGHE (via CH3 region). Expressed in bone marrow mast cells, as well as in the pineal gland at night.

It is found in the cell membrane. Functionally, high-affinity receptor for immunoglobulin epsilon/IgE. Mediates IgE effector functions in myeloid cells. Upon IgE binding and antigen/allergen cross-linking initiates signaling pathways that lead to myeloid cell activation and differentiation. On mast cells, basophils and eosinophils stimulates the secretion of vasoactive amines, lipid mediators and cytokines that contribute to inflammatory response, tissue remodeling and cytotoxicity against microbes. Triggers the immediate hypersensitivity response to allergens as a host defense mechanism against helminth parasites, pathogenic bacteria and venom toxicity. When dysregulated, it can elicit harmful life-threatening allergic and anaphylactic reactions. The polypeptide is High affinity immunoglobulin epsilon receptor subunit alpha (Fcer1a) (Mus musculus (Mouse)).